Consider the following 714-residue polypeptide: Fimbrin-3 (714 aa).

The EF-hand domain occupies 7–55; the sequence is VIVSDPWLQSQLTQVELRSLNSKFVALKNQSGKVTLEDLPSVLVKVKSL. Calponin-homology (CH) domains are found at residues 124–241, 269–372, 393–499, and 514–622; these read QSEK…KIQL, LPPE…HERN, CRDE…RTHM, and DMTD…YWSL. Actin-binding regions lie at residues 124–372 and 393–622; these read QSEK…HERN and CRDE…YWSL. Positions 628–662 are enriched in low complexity; that stretch reads SSESSSSSSDSSSTHSTTTTCTSTCTSTDASPAPS. The segment at 628 to 694 is disordered; sequence SSESSSSSSD…NEVSSLTIEE (67 aa). A compositionally biased stretch (polar residues) spans 670-680; it reads SSLNGEVSSLT. Residues 681–694 show a composition bias toward acidic residues; that stretch reads IEEDNEVSSLTIEE.

Interacts with F-actin.

It localises to the cytoplasm. The protein localises to the cytoskeleton. Functionally, cross-links actin filaments (F-actin). Stabilizes and prevents F-actin depolymerization mediated by profilin. May regulate actin cytoarchitecture, cell cycle, cell division, cell elongation and cytoplasmic tractus. This is Fimbrin-3 from Arabidopsis thaliana (Mouse-ear cress).